A 795-amino-acid chain; its full sequence is Phenylalanine--tRNA ligase beta subunit (795 aa).

A tRNA-binding domain is found at 39-148; sequence AGSFNGVVVG…ADAPLGTDIR (110 aa). The B5 domain occupies 401–476; that stretch reads PKRATITLRR…RVYGYNNIPD (76 aa). Mg(2+) contacts are provided by Asp454, Asp460, Glu463, and Glu464. The FDX-ACB domain maps to 701–794; the sequence is SRFPANRRDI…LKERFQASLR (94 aa).

It belongs to the phenylalanyl-tRNA synthetase beta subunit family. Type 1 subfamily. In terms of assembly, tetramer of two alpha and two beta subunits. Mg(2+) serves as cofactor.

It is found in the cytoplasm. It carries out the reaction tRNA(Phe) + L-phenylalanine + ATP = L-phenylalanyl-tRNA(Phe) + AMP + diphosphate + H(+). In Salmonella paratyphi A (strain ATCC 9150 / SARB42), this protein is Phenylalanine--tRNA ligase beta subunit.